Reading from the N-terminus, the 236-residue chain is 1-(5-phosphoribosyl)-5-[(5-phosphoribosylamino)methylideneamino] imidazole-4-carboxamide isomerase (236 aa).

Aspartate 8 serves as the catalytic Proton acceptor. Aspartate 129 (proton donor) is an active-site residue.

Belongs to the HisA/HisF family.

The protein resides in the cytoplasm. The enzyme catalyses 1-(5-phospho-beta-D-ribosyl)-5-[(5-phospho-beta-D-ribosylamino)methylideneamino]imidazole-4-carboxamide = 5-[(5-phospho-1-deoxy-D-ribulos-1-ylimino)methylamino]-1-(5-phospho-beta-D-ribosyl)imidazole-4-carboxamide. It functions in the pathway amino-acid biosynthesis; L-histidine biosynthesis; L-histidine from 5-phospho-alpha-D-ribose 1-diphosphate: step 4/9. The sequence is that of 1-(5-phosphoribosyl)-5-[(5-phosphoribosylamino)methylideneamino] imidazole-4-carboxamide isomerase from Methanocorpusculum labreanum (strain ATCC 43576 / DSM 4855 / Z).